Reading from the N-terminus, the 727-residue chain is Glucans biosynthesis glucosyltransferase H (727 aa).

The interval 18 to 38 (SAMPNERPGAMEPQNLSKMPE) is disordered. 7 helical membrane passes run 58–78 (FLVVGGALLLSLFAIYEMGAV), 97–117 (VNFCWIALAFCSGIAGFLILL), 278–298 (LQQFAARIYGPVIGTGLGWWV), 408–428 (IMAYLSSPFWLMLILTGLMLA), 460–480 (LFYITMGVLFGPKIFGVLLLL), 496–516 (IFSVIFEVILSALIAPIMMFI), and 572–592 (LLAWMSPALIGLWIAVPISAW).

Belongs to the glycosyltransferase 2 family. OpgH subfamily.

The protein localises to the cell inner membrane. It functions in the pathway glycan metabolism; osmoregulated periplasmic glucan (OPG) biosynthesis. Functionally, involved in the biosynthesis of osmoregulated periplasmic glucans (OPGs). This Shewanella baltica (strain OS223) protein is Glucans biosynthesis glucosyltransferase H.